The sequence spans 929 residues: Leucine--tRNA ligase (929 aa).

The 'HIGH' region signature appears at 42–52 (PYPSGNLHMGH). Residues 614–618 (KMSKS) carry the 'KMSKS' region motif. Residue lysine 617 participates in ATP binding.

The protein belongs to the class-I aminoacyl-tRNA synthetase family.

It localises to the cytoplasm. The enzyme catalyses tRNA(Leu) + L-leucine + ATP = L-leucyl-tRNA(Leu) + AMP + diphosphate. In Trichodesmium erythraeum (strain IMS101), this protein is Leucine--tRNA ligase.